Reading from the N-terminus, the 969-residue chain is Rab3 GTPase-activating protein catalytic subunit (969 aa).

Positions 532–549 (DDGKKSSSSDGARDRSRG) are enriched in basic and acidic residues. The interval 532-613 (DDGKKSSSSD…PEGRLQPHGT (82 aa)) is disordered. Residues 550–572 (APEGAGPEGAGPAEAAGKSWDSW) are compositionally biased toward low complexity. Positions 573–589 (SDSEDEFFECVSDTEEM) are enriched in acidic residues. A compositionally biased stretch (basic and acidic residues) spans 590-608 (KEDKEEAENRSRSKPEGRL).

It belongs to the Rab3-GAP catalytic subunit family. As to quaternary structure, the Rab3 GTPase-activating complex is a heterodimer composed of rab3gap1 and rab3gap2. The Rab3 GTPase-activating complex interacts with DMXL2. Interacts with LMAN1.

It is found in the cytoplasm. Its subcellular location is the endoplasmic reticulum. The protein localises to the golgi apparatus. It localises to the cis-Golgi network. Its function is as follows. Catalytic subunit of the Rab3 GTPase-activating (Rab3GAP) complex composed of rab3gap1 and rab3gap2, which has GTPase-activating protein (GAP) activity towards various Rab3 subfamily members (RAB3A, RAB3B, RAB3C and RAB3D), RAB5A and RAB43, and guanine nucleotide exchange factor (GEF) activity towards RAB18. As part of the Rab3GAP complex, acts as a GAP for Rab3 proteins by converting active RAB3-GTP to the inactive form RAB3-GDP. Rab3 proteins are involved in regulated exocytosis of neurotransmitters and hormones. The Rab3GAP complex, acts as a GEF for RAB18 by promoting the conversion of inactive RAB18-GDP to the active form RAB18-GTP. Recruits and stabilizes RAB18 at the cis-Golgi membrane where RAB18 is most likely activated. Also involved in RAB18 recruitment at the endoplasmic reticulum (ER) membrane where it maintains proper ER structure. Required for normal eye and brain development. May participate in neurodevelopmental processes such as proliferation, migration and differentiation before synapse formation, and non-synaptic vesicular release of neurotransmitters. In Danio rerio (Zebrafish), this protein is Rab3 GTPase-activating protein catalytic subunit (rab3gap1).